A 302-amino-acid polypeptide reads, in one-letter code: F-box protein SKIP19 (302 aa).

Residues 16-63 enclose the F-box domain; it reads STNWTELPPELTSAILHRLGAIEILENAQKVCRSWRRVCKDPSMWRKI.

Part of a SCF (ASK-cullin-F-box) protein ligase complex. Interacts with CUL1 and SPK1B/ASK2.

The protein resides in the nucleus. It functions in the pathway protein modification; protein ubiquitination. Functionally, component of SCF(ASK-cullin-F-box) E3 ubiquitin ligase complexes, which may mediate the ubiquitination and subsequent proteasomal degradation of target proteins. The sequence is that of F-box protein SKIP19 (SKIP19) from Arabidopsis thaliana (Mouse-ear cress).